The following is a 659-amino-acid chain: Acetyl-coenzyme A synthetase (659 aa).

Positions Met-1–His-35 are disordered. CoA-binding positions include Arg-205–Ser-208, Thr-323, and Asn-347. Residues Gly-399–Pro-401, Asp-423–Thr-428, Asp-512, and Arg-527 each bind ATP. Position 535 (Ser-535) interacts with CoA. Position 538 (Arg-538) interacts with ATP. Mg(2+) contacts are provided by Val-549, His-551, and Val-554. Position 621 is an N6-acetyllysine (Lys-621).

It belongs to the ATP-dependent AMP-binding enzyme family. The cofactor is Mg(2+). In terms of processing, acetylated. Deacetylation by the SIR2-homolog deacetylase activates the enzyme.

The enzyme catalyses acetate + ATP + CoA = acetyl-CoA + AMP + diphosphate. In terms of biological role, catalyzes the conversion of acetate into acetyl-CoA (AcCoA), an essential intermediate at the junction of anabolic and catabolic pathways. AcsA undergoes a two-step reaction. In the first half reaction, AcsA combines acetate with ATP to form acetyl-adenylate (AcAMP) intermediate. In the second half reaction, it can then transfer the acetyl group from AcAMP to the sulfhydryl group of CoA, forming the product AcCoA. The polypeptide is Acetyl-coenzyme A synthetase (Chlorobaculum tepidum (strain ATCC 49652 / DSM 12025 / NBRC 103806 / TLS) (Chlorobium tepidum)).